Reading from the N-terminus, the 160-residue chain is Eukaryotic translation initiation factor 5A-1/2 (160 aa).

Positions Met-1–Ala-12 are enriched in basic and acidic residues. The disordered stretch occupies residues Met-1–Pro-21. Lys-52 bears the Hypusine mark.

This sequence belongs to the eIF-5A family. Lys-52 undergoes hypusination, a unique post-translational modification that consists in the addition of a butylamino group from spermidine to lysine side chain, leading to the formation of the unusual amino acid hypusine. eIF-5As are the only known proteins to undergo this modification, which is essential for their function.

In terms of biological role, translation factor that promotes translation elongation and termination, particularly upon ribosome stalling at specific amino acid sequence contexts. Binds between the exit (E) and peptidyl (P) site of the ribosome and promotes rescue of stalled ribosome: specifically required for efficient translation of polyproline-containing peptides as well as other motifs that stall the ribosome. Acts as a ribosome quality control (RQC) cofactor by joining the RQC complex to facilitate peptidyl transfer during CAT tailing step. This Solanum tuberosum (Potato) protein is Eukaryotic translation initiation factor 5A-1/2 (EIF5A1).